We begin with the raw amino-acid sequence, 274 residues long: Formamidopyrimidine-DNA glycosylase (274 aa).

Pro-2 (schiff-base intermediate with DNA) is an active-site residue. Glu-3 (proton donor) is an active-site residue. The active-site Proton donor; for beta-elimination activity is the Lys-56. Positions 89, 107, and 148 each coordinate DNA. Residues 233–267 (LAYGRAREMCVNCETTLENLKLGQRASVFCPQCQP) form an FPG-type zinc finger. The active-site Proton donor; for delta-elimination activity is Arg-257.

This sequence belongs to the FPG family. In terms of assembly, monomer. The cofactor is Zn(2+).

The enzyme catalyses Hydrolysis of DNA containing ring-opened 7-methylguanine residues, releasing 2,6-diamino-4-hydroxy-5-(N-methyl)formamidopyrimidine.. It carries out the reaction 2'-deoxyribonucleotide-(2'-deoxyribose 5'-phosphate)-2'-deoxyribonucleotide-DNA = a 3'-end 2'-deoxyribonucleotide-(2,3-dehydro-2,3-deoxyribose 5'-phosphate)-DNA + a 5'-end 5'-phospho-2'-deoxyribonucleoside-DNA + H(+). Involved in base excision repair of DNA damaged by oxidation or by mutagenic agents. Acts as a DNA glycosylase that recognizes and removes damaged bases. Has a preference for oxidized purines, such as 7,8-dihydro-8-oxoguanine (8-oxoG). Has AP (apurinic/apyrimidinic) lyase activity and introduces nicks in the DNA strand. Cleaves the DNA backbone by beta-delta elimination to generate a single-strand break at the site of the removed base with both 3'- and 5'-phosphates. The sequence is that of Formamidopyrimidine-DNA glycosylase from Acinetobacter baumannii (strain SDF).